The chain runs to 79 residues: Ornithine decarboxylase (79 aa).

Residues S8, G45, and 75 to 78 each bind pyridoxal 5'-phosphate; that span reads EPGR.

Belongs to the Orn/Lys/Arg decarboxylase class-II family. As to quaternary structure, homodimer. Only the dimer is catalytically active, as the active sites are constructed of residues from both monomers. Pyridoxal 5'-phosphate is required as a cofactor.

Its subcellular location is the cytoplasm. The catalysed reaction is L-ornithine + H(+) = putrescine + CO2. The protein operates within amine and polyamine biosynthesis; putrescine biosynthesis via L-ornithine pathway; putrescine from L-ornithine: step 1/1. Its activity is regulated as follows. Inhibited by antizyme (AZ) OAZ1 in response to polyamine levels. AZ inhibits the assembly of the functional homodimer by binding to ODC monomers and targeting them for ubiquitin-independent proteolytic destruction by the 26S proteasome. Catalyzes the first and rate-limiting step of polyamine biosynthesis that converts ornithine into putrescine, which is the precursor for the polyamines, spermidine and spermine. Polyamines are essential for cell proliferation and are implicated in cellular processes, ranging from DNA replication to apoptosis. In Paracoccidioides brasiliensis, this protein is Ornithine decarboxylase (ODC).